A 159-amino-acid chain; its full sequence is NADH-quinone oxidoreductase subunit I (159 aa).

4Fe-4S ferredoxin-type domains follow at residues 51–80 and 90–119; these read RRYE…IEAE and TRYD…EGPN. 8 residues coordinate [4Fe-4S] cluster: cysteine 60, cysteine 63, cysteine 66, cysteine 70, cysteine 99, cysteine 102, cysteine 105, and cysteine 109.

It belongs to the complex I 23 kDa subunit family. As to quaternary structure, NDH-1 is composed of 14 different subunits. Subunits NuoA, H, J, K, L, M, N constitute the membrane sector of the complex. Requires [4Fe-4S] cluster as cofactor.

The protein resides in the cell inner membrane. It catalyses the reaction a quinone + NADH + 5 H(+)(in) = a quinol + NAD(+) + 4 H(+)(out). In terms of biological role, NDH-1 shuttles electrons from NADH, via FMN and iron-sulfur (Fe-S) centers, to quinones in the respiratory chain. The immediate electron acceptor for the enzyme in this species is believed to be ubiquinone. Couples the redox reaction to proton translocation (for every two electrons transferred, four hydrogen ions are translocated across the cytoplasmic membrane), and thus conserves the redox energy in a proton gradient. The sequence is that of NADH-quinone oxidoreductase subunit I from Rickettsia canadensis (strain McKiel).